Reading from the N-terminus, the 291-residue chain is ATP phosphoribosyltransferase 1 (291 aa).

It belongs to the ATP phosphoribosyltransferase family. Long subfamily. It depends on Mg(2+) as a cofactor.

It localises to the cytoplasm. The enzyme catalyses 1-(5-phospho-beta-D-ribosyl)-ATP + diphosphate = 5-phospho-alpha-D-ribose 1-diphosphate + ATP. The protein operates within amino-acid biosynthesis; L-histidine biosynthesis; L-histidine from 5-phospho-alpha-D-ribose 1-diphosphate: step 1/9. Its activity is regulated as follows. Feedback inhibited by histidine. In terms of biological role, catalyzes the condensation of ATP and 5-phosphoribose 1-diphosphate to form N'-(5'-phosphoribosyl)-ATP (PR-ATP). Has a crucial role in the pathway because the rate of histidine biosynthesis seems to be controlled primarily by regulation of HisG enzymatic activity. This is ATP phosphoribosyltransferase 1 from Geobacter sulfurreducens (strain ATCC 51573 / DSM 12127 / PCA).